An 830-amino-acid polypeptide reads, in one-letter code: Ribosome biogenesis protein ERB1 (830 aa).

Residues 1–141 (MAPQPLKVGT…ENKDLPVDEK (141 aa)) are disordered. 2 stretches are compositionally biased toward acidic residues: residues 35–44 (VSEESDEEFG) and 52–109 (MSDD…DSDS). Over residues 131–141 (EENKDLPVDEK) the composition is skewed to basic and acidic residues. WD repeat units lie at residues 481–520 (PGDT…EVWR), 523–563 (LHAG…APHI), 660–698 (KTPG…LIRT), 701–740 (SGVK…KPYK), 744–783 (YHNR…DLMQ), and 799–830 (IDGI…LWCS).

The protein belongs to the WD repeat BOP1/ERB1 family. As to quaternary structure, component of the NOP7 complex, composed of ERB1, NOP7 and YTM1. The complex is held together by ERB1, which interacts with NOP7 via its N-terminal domain and with YTM1 via a high-affinity interaction between the seven-bladed beta-propeller domains of the 2 proteins. The NOP7 complex associates with the 66S pre-ribosome.

Its subcellular location is the nucleus. It is found in the nucleolus. The protein resides in the nucleoplasm. Component of the NOP7 complex, which is required for maturation of the 25S and 5.8S ribosomal RNAs and formation of the 60S ribosome. The protein is Ribosome biogenesis protein ERB1 of Cryptococcus neoformans var. neoformans serotype D (strain B-3501A) (Filobasidiella neoformans).